We begin with the raw amino-acid sequence, 296 residues long: Maltose/maltodextrin transport system permease protein MalG (296 aa).

Residues 1–12 are Cytoplasmic-facing; sequence MAMVQPKSQKLR. The helical transmembrane segment at 13–35 threads the bilayer; sequence LLITHLGLLIFIAAIMFPLLMVI. At 36-88 the chain is on the periplasmic side; the sequence is AISLREGNFATGSLIPDKISWEHWRLALGFSVEHADGRVTPPPFPVLLWLWNS. In terms of domain architecture, ABC transmembrane type-1 spans 85–281; the sequence is LWNSVKIAGI…IPITLVFLLA (197 aa). The chain crosses the membrane as a helical span at residues 89–111; it reads VKIAGITAIGIVALSTTCAYAFA. The Cytoplasmic portion of the chain corresponds to 112–123; sequence RMRFPGKATLLK. A helical transmembrane segment spans residues 124 to 143; that stretch reads GMLIFQMFPAVLSLVALYAL. Over 144 to 152 the chain is Periplasmic; it reads FDRLGQYIP. Residues 153–175 traverse the membrane as a helical segment; it reads FIGLNTHGGVIFAYLGGIALHVW. At 176–204 the chain is on the cytoplasmic side; that stretch reads TIKGYFETIDSSLEEAAALDGATPWQAFR. A helical transmembrane segment spans residues 205 to 227; sequence LVLLPLSVPILAVVFILSFIAAI. Topologically, residues 228-257 are periplasmic; that stretch reads TEVPVASLLLRDVDSYTLAVGMQQYLNPQN. The chain crosses the membrane as a helical span at residues 258-280; that stretch reads YLWGDFAAAAVLSAIPITLVFLL. Topologically, residues 281-296 are cytoplasmic; the sequence is AQRWLVNGLTAGGVKG.

The protein belongs to the binding-protein-dependent transport system permease family. MalFG subfamily. As to quaternary structure, the complex is composed of two ATP-binding proteins (MalK), two transmembrane proteins (MalG and MalF) and a solute-binding protein (MalE).

It localises to the cell inner membrane. Its function is as follows. Part of the ABC transporter complex MalEFGK involved in maltose/maltodextrin import. Probably responsible for the translocation of the substrate across the membrane. The protein is Maltose/maltodextrin transport system permease protein MalG (malG) of Salmonella typhimurium (strain LT2 / SGSC1412 / ATCC 700720).